The primary structure comprises 634 residues: Extracellular metalloproteinase mep (634 aa).

A signal peptide spans 1–18; it reads MRGLLLAGALALPASVFA. Positions 19–245 are excised as a propeptide; that stretch reads HPAHQSYGLN…IHGVVDYVAE (227 aa). Residue Asn-286 is glycosylated (N-linked (GlcNAc...) asparagine). His-429 provides a ligand contact to Zn(2+). Glu-430 is an active-site residue. A Zn(2+)-binding site is contributed by His-433.

Belongs to the peptidase M36 family. Requires Zn(2+) as cofactor.

The protein localises to the secreted. Functionally, secreted metalloproteinase that allows assimilation of proteinaceous substrates and probably acts as a virulence factor. This chain is Extracellular metalloproteinase mep (mep), found in Aspergillus fumigatus (strain CBS 144.89 / FGSC A1163 / CEA10) (Neosartorya fumigata).